A 1196-amino-acid polypeptide reads, in one-letter code: DNA-directed RNA polymerase subunit 2 (1196 aa).

Residues 1074–1095 (SRARGPTQLLTRQAPEGRSRDG) are disordered. Residues 1133–1154 (CDSCGQFAHKVPEKKYYTCTGC) form a C4-type zinc finger.

It belongs to the RNA polymerase beta chain family.

The protein resides in the virion. It catalyses the reaction RNA(n) + a ribonucleoside 5'-triphosphate = RNA(n+1) + diphosphate. Functionally, DNA-dependent RNA polymerase catalyzes the transcription of DNA into RNA using the four ribonucleoside triphosphates as substrates. This is DNA-directed RNA polymerase subunit 2 (RPO2) from Acanthamoeba polyphaga mimivirus (APMV).